The following is a 479-amino-acid chain: Transcriptional regulator ERG (479 aa).

A compositionally biased stretch (polar residues) spans Thr-34–Met-47. 2 disordered regions span residues Thr-34–Trp-56 and Pro-72–Lys-92. Phosphoserine is present on residues Ser-48, Ser-81, and Ser-96. One can recognise a PNT domain in the interval Met-113–Pro-199. Positions Gln-242 to Tyr-293 are disordered. Polar residues predominate over residues Thr-267–Pro-281. Residue Lys-282 forms a Glycyl lysine isopeptide (Lys-Gly) (interchain with G-Cter in SUMO2) linkage. The segment at residues Ile-311 to Asp-391 is a DNA-binding region (ETS).

Belongs to the ETS family. In terms of assembly, identified in a IGF2BP1-dependent mRNP granule complex containing untranslated mRNAs. Interacts with SETDB1.

The protein resides in the nucleus. It localises to the cytoplasm. Functionally, transcriptional regulator. May participate in transcriptional regulation through the recruitment of SETDB1 histone methyltransferase and subsequent modification of local chromatin structure. This is Transcriptional regulator ERG (ERG) from Homo sapiens (Human).